The sequence spans 1241 residues: DNA-directed RNA polymerase subunit beta (1241 aa).

The disordered stretch occupies residues 1201–1224; sequence AEEEQDTDVDYITEDDFESPDPEI.

It belongs to the RNA polymerase beta chain family. The RNAP catalytic core consists of 2 alpha, 1 beta, 1 beta' and 1 omega subunit. When a sigma factor is associated with the core the holoenzyme is formed, which can initiate transcription.

The enzyme catalyses RNA(n) + a ribonucleoside 5'-triphosphate = RNA(n+1) + diphosphate. Functionally, DNA-dependent RNA polymerase catalyzes the transcription of DNA into RNA using the four ribonucleoside triphosphates as substrates. This is DNA-directed RNA polymerase subunit beta from Alkaliphilus oremlandii (strain OhILAs) (Clostridium oremlandii (strain OhILAs)).